A 73-amino-acid chain; its full sequence is MANSRNKSSNELAVHGAQQAIDQMKYEIASEFGVTLGPDTTARANGSVGGEITKRLVQMAEQQLGGGRSKSLS.

It belongs to the alpha/beta-type SASP family.

SASP are bound to spore DNA. They are double-stranded DNA-binding proteins that cause DNA to change to an a-like conformation. They protect the DNA backbone from chemical and enzymatic cleavage and are thus involved in dormant spore's high resistance to UV light. This is Small, acid-soluble spore protein C5 (SASP-C5) from Priestia megaterium (Bacillus megaterium).